Here is a 738-residue protein sequence, read N- to C-terminus: uncharacterized protein (738 aa).

Polar residues-rich tracts occupy residues 1–34 (MSSS…QVSS), 140–169 (TSSD…QSPP), and 177–197 (KPFS…STKD). 2 disordered regions span residues 1–51 (MSSS…AASI) and 140–197 (TSSD…STKD). Residues 363–434 (SRLFLGHLNT…QKLHLEISKI (72 aa)) enclose the RRM domain. The segment at 466-487 (YPTSSRKRTRSPLMSKGKSYDR) is disordered.

This is an uncharacterized protein from Schizosaccharomyces pombe (strain 972 / ATCC 24843) (Fission yeast).